The primary structure comprises 623 residues: Glutathione import ATP-binding protein GsiA (623 aa).

ABC transporter domains are found at residues 15–269 (VENL…RALL) and 314–564 (LRVR…RKLL). ATP is bound by residues 49–56 (GESGSGKS) and 357–364 (GESGSGKS).

The protein belongs to the ABC transporter superfamily. Glutathione importer (TC 3.A.1.5.11) family. As to quaternary structure, the complex is composed of two ATP-binding proteins (GsiA), two transmembrane proteins (GsiC and GsiD) and a solute-binding protein (GsiB).

The protein resides in the cell inner membrane. The catalysed reaction is glutathione(out) + ATP + H2O = glutathione(in) + ADP + phosphate + H(+). Functionally, part of the ABC transporter complex GsiABCD involved in glutathione import. Responsible for energy coupling to the transport system. This is Glutathione import ATP-binding protein GsiA from Escherichia coli O6:H1 (strain CFT073 / ATCC 700928 / UPEC).